A 242-amino-acid chain; its full sequence is Hairy and enhancer of split-related protein HELT (242 aa).

The region spanning 10–65 is the bHLH domain; sequence RTPVSHKVIEKRRRDRINRCLNELGKTVPMALAKQSSGKLEKAEILEMTVQYLRAL. Residue K48 is modified to N6-acetyllysine. One can recognise an Orange domain in the interval 87-122; sequence FHYGYHECMKNLVHYLTTVERMETKDTKYARILAFL.

Belongs to the HEY family. As to quaternary structure, self-associates. Interacts with HES5 and HEY2.

The protein localises to the nucleus. Transcriptional repressor which binds preferentially to the canonical E box sequence 5'-CACGCG-3'. The polypeptide is Hairy and enhancer of split-related protein HELT (HELT) (Homo sapiens (Human)).